Here is a 92-residue protein sequence, read N- to C-terminus: MPRSVWKGPFVDGYLLKKAEKSHEGGRKQAIKTWSRRSTIMPQFVGLTFQVHNGNKFVPVLVTEDMVGHKLGEFSPSRTYYGHAADKKAKRR.

A disordered region spans residues 73–92 (EFSPSRTYYGHAADKKAKRR).

It belongs to the universal ribosomal protein uS19 family.

In terms of biological role, protein S19 forms a complex with S13 that binds strongly to the 16S ribosomal RNA. This chain is Small ribosomal subunit protein uS19, found in Maricaulis maris (strain MCS10) (Caulobacter maris).